The sequence spans 205 residues: Putative 3-methyladenine DNA glycosylase (205 aa).

The protein belongs to the DNA glycosylase MPG family.

The polypeptide is Putative 3-methyladenine DNA glycosylase (Staphylococcus epidermidis (strain ATCC 35984 / DSM 28319 / BCRC 17069 / CCUG 31568 / BM 3577 / RP62A)).